The primary structure comprises 295 residues: 4-hydroxybenzoate octaprenyltransferase (295 aa).

The next 8 helical transmembrane spans lie at 28–48 (PIGIYLLLWPTLWAVWIAADG), 55–75 (VLIFTCGVILMRSAGCVINDF), 103–123 (WALFAVLVALSFGLVLLTDPF), 147–167 (LPQLVLGAAYSWGIPMAFTAA), 175–195 (AWLIFAANLAWTVAYDTYYAM), 219–239 (AIILALQGLTLGLLLVVGMRL), 241–261 (LGPYFHLGLLVAALCFAWEFV), and 275–295 (FLHNHWAGLAILVGLILDYGI).

It belongs to the UbiA prenyltransferase family. Requires Mg(2+) as cofactor.

It is found in the cell inner membrane. The enzyme catalyses all-trans-octaprenyl diphosphate + 4-hydroxybenzoate = 4-hydroxy-3-(all-trans-octaprenyl)benzoate + diphosphate. It functions in the pathway cofactor biosynthesis; ubiquinone biosynthesis. Its function is as follows. Catalyzes the prenylation of para-hydroxybenzoate (PHB) with an all-trans polyprenyl group. Mediates the second step in the final reaction sequence of ubiquinone-8 (UQ-8) biosynthesis, which is the condensation of the polyisoprenoid side chain with PHB, generating the first membrane-bound Q intermediate 3-octaprenyl-4-hydroxybenzoate. The protein is 4-hydroxybenzoate octaprenyltransferase of Azotobacter vinelandii (strain DJ / ATCC BAA-1303).